The sequence spans 3166 residues: Intermembrane lipid transfer protein VPS13A (3166 aa).

A Chorein N-terminal domain is found at 3 to 116 (FESVVVEVLN…LMETKQQELK (114 aa)). TPR repeat units lie at residues 212-245 (LFAY…ENIV) and 373-406 (LTSK…QQAE). Thr-831 is subject to Phosphothreonine. The residue at position 835 (Ser-835) is a Phosphoserine. Positions 838-844 (EFFDAPC) match the FFAT motif. Polar residues predominate over residues 1343 to 1359 (APSSANKDPETMTSGVT). The tract at residues 1343-1365 (APSSANKDPETMTSGVTSPPDHS) is disordered. Ser-1410 bears the Phosphoserine mark. TPR repeat units follow at residues 1806-1840 (AIVE…TLSK) and 1999-2034 (ISVF…VPED). The 246-residue stretch at 2202 to 2447 (VAFHSPYWMV…VYYTWADPVG (246 aa)) folds into the SHR-BD domain. 2 required for mitochondrial localization regions span residues 2607-3166 (LQPH…SPRL) and 2743-3166 (EYEV…SPRL). TPR repeat units lie at residues 2716 to 2750 (ADLV…VSSV) and 2852 to 2890 (ILGL…PEEF). The segment at 2945–3019 (PAGLREGITR…SSTFQGIKRA (75 aa)) is required for lipid droplet localization.

This sequence belongs to the VPS13 family. Interacts (via FFAT motif) with VAPA and VAPB. Interacts with RAB7A. Interacts with XK.

It is found in the mitochondrion outer membrane. The protein localises to the endoplasmic reticulum membrane. It localises to the endosome membrane. The protein resides in the lysosome membrane. Its subcellular location is the lipid droplet. It is found in the golgi apparatus. The protein localises to the cytoplasmic vesicle. It localises to the secretory vesicle. The protein resides in the neuronal dense core vesicle. Its function is as follows. Mediates the transfer of lipids between membranes at organelle contact sites. Required for the formation or stabilization of ER-mitochondria contact sites which enable transfer of lipids between the ER and mitochondria. Negatively regulates lipid droplet size and motility. Required for efficient lysosomal protein degradation. In Mus musculus (Mouse), this protein is Intermembrane lipid transfer protein VPS13A.